We begin with the raw amino-acid sequence, 385 residues long: Multicilin (385 aa).

Positions 1-130 are necessary and sufficient for its degradation during the cell cycle; that stretch reads MQACGGGAAG…TVDDLISDSS (130 aa). The segment at 86–111 is disordered; that stretch reads SSLLGSDAPPGGDLAASQNHSHQTEA. Residues 131 to 385 are necessary and sufficient for proper nuclear localization; sequence SMMSPTLASG…GGYKFRWVPS (255 aa). Positions 173 to 245 are necessary and sufficient for interaction with GMNN and sufficient for homodimerization; sequence PDVPPPEQYW…SVLDKLMITQ (73 aa). The stretch at 179 to 227 forms a coiled coil; that stretch reads EQYWKEVADQNQRALGDALVENNQLHVTLTQKQEEIASLKERNVQLKEL. A disordered region spans residues 294–319; the sequence is ALQSRDPKRPRLLPEPANTDTRPGNL.

It belongs to the geminin family. In terms of assembly, heterodimer (via coiled-coil domain) with GMNN (via coiled-coil domain); targets GMNN to the nucleus. Can form homodimers (in vitro, via coiled-coil domain), but these are much less stable than the heterodimer formed with GMNN.

Its subcellular location is the nucleus. Transcription regulator specifically required for multiciliate cell differentiation. Acts in a multiprotein complex containing E2F4 and E2F5 that binds and activates genes required for centriole biogenesis. Required for the deuterosome-mediated acentriolar pathway. Plays a role in mitotic cell cycle progression by promoting cell cycle exit. Modulates GMNN activity by reducing its affinity for CDT1. The chain is Multicilin from Homo sapiens (Human).